The following is a 60-amino-acid chain: Small ribosomal subunit protein eS31 (60 aa).

Positions 24, 27, 42, and 45 each coordinate Zn(2+). Residues Cys-24–Cys-45 form a C4-type zinc finger.

The protein belongs to the eukaryotic ribosomal protein eS31 family. Part of the 30S ribosomal subunit. Requires Zn(2+) as cofactor.

This is Small ribosomal subunit protein eS31 from Methanopyrus kandleri (strain AV19 / DSM 6324 / JCM 9639 / NBRC 100938).